The chain runs to 512 residues: D-alanine--D-alanyl carrier protein ligase (512 aa).

152–153 (TS) is an ATP binding site. Residue D199 participates in D-alanine binding. An ATP-binding site is contributed by 294–299 (NAYGPT). Residue V303 participates in D-alanine binding. ATP contacts are provided by residues D385, 397 to 400 (YGGR), and K499. K499 serves as a coordination point for D-alanine.

The protein belongs to the ATP-dependent AMP-binding enzyme family. DltA subfamily.

The protein resides in the cytoplasm. The catalysed reaction is holo-[D-alanyl-carrier protein] + D-alanine + ATP = D-alanyl-[D-alanyl-carrier protein] + AMP + diphosphate. It participates in cell wall biogenesis; lipoteichoic acid biosynthesis. Catalyzes the first step in the D-alanylation of lipoteichoic acid (LTA), the activation of D-alanine and its transfer onto the D-alanyl carrier protein (Dcp) DltC. In an ATP-dependent two-step reaction, forms a high energy D-alanyl-AMP intermediate, followed by transfer of the D-alanyl residue as a thiol ester to the phosphopantheinyl prosthetic group of the Dcp. D-alanylation of LTA plays an important role in modulating the properties of the cell wall in Gram-positive bacteria, influencing the net charge of the cell wall. The protein is D-alanine--D-alanyl carrier protein ligase of Streptococcus pyogenes serotype M49 (strain NZ131).